The chain runs to 143 residues: MKTIMAKPGQVERKWYVVDAAGKPLGRLSAGIARILMGKHKPIWTPGVDCGDFVIVINAEKVALSGSKELKKVYYDHSGYLGGQRVTPAWQLRQKKPEQLIYRSVKGMLPKNSLGRRQITHLKVYAGPEHPHQAQQPEKIELP.

This sequence belongs to the universal ribosomal protein uL13 family. As to quaternary structure, part of the 50S ribosomal subunit.

This protein is one of the early assembly proteins of the 50S ribosomal subunit, although it is not seen to bind rRNA by itself. It is important during the early stages of 50S assembly. This chain is Large ribosomal subunit protein uL13, found in Coprothermobacter proteolyticus (strain ATCC 35245 / DSM 5265 / OCM 4 / BT).